A 425-amino-acid chain; its full sequence is Metacaspase-1 (425 aa).

A disordered region spans residues 1–110 (MSYNSNPYNG…PQLPNTQTQS (110 aa)). The segment covering 13 to 28 (YPPYNTYTRPNYSPNN) has biased composition (low complexity). Polar residues-rich tracts occupy residues 29–38 (GSQSNNTVHQ) and 88–110 (TGAN…QTQS). Active-site residues include H214 and C270.

Belongs to the peptidase C14B family.

It localises to the cytoplasm. The protein resides in the nucleus. In terms of biological role, involved in cell death (apoptosis). The chain is Metacaspase-1 (pca1) from Schizosaccharomyces pombe (strain 972 / ATCC 24843) (Fission yeast).